Here is a 930-residue protein sequence, read N- to C-terminus: Isoleucine--tRNA ligase (930 aa).

The 'HIGH' region signature appears at 57–67 (PYANGNIHVGH). An L-isoleucyl-5'-AMP-binding site is contributed by Glu554. A 'KMSKS' region motif is present at residues 595–599 (KMSKS). Lys598 lines the ATP pocket. Residues Cys888, Cys891, Cys908, and Cys911 each contribute to the Zn(2+) site.

Belongs to the class-I aminoacyl-tRNA synthetase family. IleS type 1 subfamily. As to quaternary structure, monomer. The cofactor is Zn(2+).

The protein localises to the cytoplasm. The catalysed reaction is tRNA(Ile) + L-isoleucine + ATP = L-isoleucyl-tRNA(Ile) + AMP + diphosphate. Catalyzes the attachment of isoleucine to tRNA(Ile). As IleRS can inadvertently accommodate and process structurally similar amino acids such as valine, to avoid such errors it has two additional distinct tRNA(Ile)-dependent editing activities. One activity is designated as 'pretransfer' editing and involves the hydrolysis of activated Val-AMP. The other activity is designated 'posttransfer' editing and involves deacylation of mischarged Val-tRNA(Ile). The protein is Isoleucine--tRNA ligase of Streptococcus pneumoniae (strain Hungary19A-6).